The following is a 490-amino-acid chain: GTPase Der (490 aa).

Residues 1-165 form the EngA-type G 1 domain; that stretch reads MRIAILGRPN…RIRQVAEIPL (165 aa). GTP contacts are provided by residues 7-14, 54-58, and 117-120; these read GRPNVGKS, DTGGV, and NKAD. The tract at residues 165 to 184 is disordered; sequence LPSAEEQENTQEEEFSSKES. The segment covering 169 to 178 has biased composition (acidic residues); sequence EEQENTQEEE. Residues 227 to 400 enclose the EngA-type G 2 domain; sequence LKVALIGHPN…AVDDVYTIAT (174 aa). Residues 233-240, 280-284, and 345-348 contribute to the GTP site; these read GHPNVGKS, DTAGL, and NKWD. Residues 401–485 enclose the KH-like domain; that stretch reads TKLSTSLVNK…PFDLEYKAKP (85 aa).

The protein belongs to the TRAFAC class TrmE-Era-EngA-EngB-Septin-like GTPase superfamily. EngA (Der) GTPase family. As to quaternary structure, associates with the 50S ribosomal subunit.

GTPase that plays an essential role in the late steps of ribosome biogenesis. The protein is GTPase Der of Chlamydia muridarum (strain MoPn / Nigg).